Here is a 284-residue protein sequence, read N- to C-terminus: Diaminopimelate epimerase (284 aa).

Substrate contacts are provided by Asn-20, Gln-53, and Asn-73. The active-site Proton donor is Cys-82. Substrate-binding positions include 83 to 84 (GN), Asn-167, Asn-200, and 218 to 219 (ER). The Proton acceptor role is filled by Cys-227. 228-229 (GS) serves as a coordination point for substrate.

It belongs to the diaminopimelate epimerase family. Homodimer.

It localises to the cytoplasm. The enzyme catalyses (2S,6S)-2,6-diaminopimelate = meso-2,6-diaminopimelate. The protein operates within amino-acid biosynthesis; L-lysine biosynthesis via DAP pathway; DL-2,6-diaminopimelate from LL-2,6-diaminopimelate: step 1/1. Functionally, catalyzes the stereoinversion of LL-2,6-diaminopimelate (L,L-DAP) to meso-diaminopimelate (meso-DAP), a precursor of L-lysine and an essential component of the bacterial peptidoglycan. This Xanthomonas oryzae pv. oryzae (strain MAFF 311018) protein is Diaminopimelate epimerase.